Consider the following 94-residue polypeptide: ESAT-6-like protein EsxL (94 aa).

It belongs to the WXG100 family. ESAT-6 subfamily. Strongly interacts with EsxK to form a heterodimeric complex under reducing conditions.

It localises to the secreted. This chain is ESAT-6-like protein EsxL, found in Mycobacterium tuberculosis (strain CDC 1551 / Oshkosh).